The chain runs to 144 residues: Large ribosomal subunit protein uL15 (144 aa).

Residues 1–53 (MYLNTLAPAEGAKHSAKRLGRGIGSGLGKTGGRGHKGQKSRTGGGVRRGFEGG) form a disordered region. Residues 21 to 31 (RGIGSGLGKTG) are compositionally biased toward gly residues.

The protein belongs to the universal ribosomal protein uL15 family. Part of the 50S ribosomal subunit.

In terms of biological role, binds to the 23S rRNA. The protein is Large ribosomal subunit protein uL15 of Mannheimia succiniciproducens (strain KCTC 0769BP / MBEL55E).